We begin with the raw amino-acid sequence, 802 residues long: Osmosensitive cation channel TMEM63C (802 aa).

The Extracellular portion of the chain corresponds to M1–G35. A helical membrane pass occupies residues I36–A60. The Cytoplasmic portion of the chain corresponds to A61–G124. S75 and S78 each carry phosphoserine. The helical transmembrane segment at E125–Y157 threads the bilayer. The Extracellular segment spans residues I158–S180. The chain crosses the membrane as a helical span at residues Q181 to C205. The Cytoplasmic portion of the chain corresponds to L206–R401. Residues F402–T431 form a helical membrane-spanning segment. Over I432–S446 the chain is Extracellular. A helical transmembrane segment spans residues P447–E476. The Cytoplasmic segment spans residues A477 to T480. Residues R481–W517 traverse the membrane as a helical segment. The Extracellular portion of the chain corresponds to L518–G540. A helical membrane pass occupies residues A541–F573. The Cytoplasmic segment spans residues L574–Q593. The helical transmembrane segment at F594–S612 threads the bilayer. At I613 to C615 the chain is on the extracellular side. A helical membrane pass occupies residues P616–S640. Residues Y641–N647 are Cytoplasmic-facing. A helical membrane pass occupies residues A648–R676. Topologically, residues V677–H681 are extracellular. A helical transmembrane segment spans residues S682–V702. The Cytoplasmic segment spans residues F703–H802. The interval T753 to E785 is disordered.

It belongs to the CSC1 (TC 1.A.17) family. As to quaternary structure, monomer. In terms of tissue distribution, expressed in podocytes of kidney glomeruli.

The protein resides in the endoplasmic reticulum membrane. Its subcellular location is the cell membrane. It carries out the reaction Ca(2+)(in) = Ca(2+)(out). Functionally, acts as an osmosensitive cation channel preferentially activated upon hypotonic stress. In contrast to TMEM63B, does not show phospholipid scramblase activity. Enriched in mitochondria-ER contact sites where it may regulate the metabolite flux and organelles' morphologies in response to osmotic changes. In particular may regulate mitochondrial motility and function in motor neuron axons. Required for the functional integrity of the kidney glomerular filtration barrier. The chain is Osmosensitive cation channel TMEM63C (Tmem63c) from Rattus norvegicus (Rat).